A 187-amino-acid chain; its full sequence is Ponticulin-like protein K (187 aa).

The first 19 residues, 1 to 19 (MKNLILLFLLISIINLIQS), serve as a signal peptide directing secretion. Residues asparagine 31, asparagine 70, asparagine 86, asparagine 93, asparagine 119, asparagine 128, asparagine 146, asparagine 160, and asparagine 161 are each glycosylated (N-linked (GlcNAc...) asparagine). A compositionally biased stretch (low complexity) spans 115–146 (PSPSNSSNPSPSPNTTSSSSLSSSSLNSNEPN). Positions 115–161 (PSPSNSSNPSPSPNTTSSSSLSSSSLNSNEPNQTTKPPKTNEPQKNN) are disordered. Over residues 147 to 161 (QTTKPPKTNEPQKNN) the composition is skewed to polar residues. Asparagine 161 carries the GPI-like-anchor amidated asparagine lipid modification. The propeptide at 162-187 (STSNIPNFFAIFGFLVLIIFILGDKI) is removed in mature form.

The protein belongs to the ponticulin family. Post-translationally, the GPI-like-anchor contains a phosphoceramide group, rather than a phosphatidyl group.

The protein localises to the cell membrane. In terms of biological role, binds F-actin and nucleates actin assembly. The polypeptide is Ponticulin-like protein K (ponK) (Dictyostelium discoideum (Social amoeba)).